A 182-amino-acid chain; its full sequence is Adenine phosphoribosyltransferase (182 aa).

It belongs to the purine/pyrimidine phosphoribosyltransferase family. In terms of assembly, homodimer.

It localises to the cytoplasm. It carries out the reaction AMP + diphosphate = 5-phospho-alpha-D-ribose 1-diphosphate + adenine. The protein operates within purine metabolism; AMP biosynthesis via salvage pathway; AMP from adenine: step 1/1. Functionally, catalyzes a salvage reaction resulting in the formation of AMP, that is energically less costly than de novo synthesis. This Stutzerimonas stutzeri (strain A1501) (Pseudomonas stutzeri) protein is Adenine phosphoribosyltransferase.